The following is a 197-amino-acid chain: Dephospho-CoA kinase (197 aa).

One can recognise a DPCK domain in the interval 2 to 197 (IIGITGGIAS…SALLSLANPR (196 aa)). An ATP-binding site is contributed by 10 to 15 (ASGKST).

The protein belongs to the CoaE family.

It is found in the cytoplasm. The catalysed reaction is 3'-dephospho-CoA + ATP = ADP + CoA + H(+). It participates in cofactor biosynthesis; coenzyme A biosynthesis; CoA from (R)-pantothenate: step 5/5. In terms of biological role, catalyzes the phosphorylation of the 3'-hydroxyl group of dephosphocoenzyme A to form coenzyme A. The protein is Dephospho-CoA kinase of Streptococcus pyogenes serotype M28 (strain MGAS6180).